A 464-amino-acid chain; its full sequence is 3-isopropylmalate dehydratase large subunit (464 aa).

[4Fe-4S] cluster-binding residues include Cys337, Cys397, and Cys400.

It belongs to the aconitase/IPM isomerase family. LeuC type 1 subfamily. In terms of assembly, heterodimer of LeuC and LeuD. [4Fe-4S] cluster is required as a cofactor.

It catalyses the reaction (2R,3S)-3-isopropylmalate = (2S)-2-isopropylmalate. It participates in amino-acid biosynthesis; L-leucine biosynthesis; L-leucine from 3-methyl-2-oxobutanoate: step 2/4. Catalyzes the isomerization between 2-isopropylmalate and 3-isopropylmalate, via the formation of 2-isopropylmaleate. This chain is 3-isopropylmalate dehydratase large subunit, found in Bacillus anthracis (strain A0248).